We begin with the raw amino-acid sequence, 222 residues long: Endonuclease V (222 aa).

Mg(2+) is bound by residues aspartate 43 and aspartate 109.

Belongs to the endonuclease V family. Requires Mg(2+) as cofactor.

It localises to the cytoplasm. The catalysed reaction is Endonucleolytic cleavage at apurinic or apyrimidinic sites to products with a 5'-phosphate.. DNA repair enzyme involved in the repair of deaminated bases. Selectively cleaves double-stranded DNA at the second phosphodiester bond 3' to a deoxyinosine leaving behind the intact lesion on the nicked DNA. The chain is Endonuclease V from Roseiflexus sp. (strain RS-1).